Here is a 385-residue protein sequence, read N- to C-terminus: Non-structural maintenance of chromosomes element 4 homolog A (385 aa).

Residues 1–69 form a disordered region; that stretch reads MSGDSSGRGP…PSDSGDEMMD (69 aa). Composition is skewed to basic and acidic residues over residues 10–21 and 42–55; these read PEGRGRGRDPHR and SARERREAPERPSL. Residues 56–68 are compositionally biased toward acidic residues; it reads EDTEPSDSGDEMM. Residue Thr345 is modified to Phosphothreonine. Position 377 is a phosphoserine (Ser377).

This sequence belongs to the NSE4 family. In terms of assembly, component of the SMC5-SMC6 complex which consists at least of SMC5, SMC6, NSMCE2, NSMCE1, NSMCE4A or EID3 and NSMCE3. NSMCE1, NSMCE4A or EID3 and NSMCE3 probably form a subcomplex that bridges the head domains of the SMC5:SMC6 heterodimer. Interacts with NSMCE3.

It localises to the nucleus. The protein localises to the chromosome. Its subcellular location is the telomere. Its function is as follows. Component of the SMC5-SMC6 complex, a complex involved in DNA double-strand breaks by homologous recombination. The complex may promote sister chromatid homologous recombination by recruiting the SMC1-SMC3 cohesin complex to double-strand breaks. The complex is required for telomere maintenance via recombination in ALT (alternative lengthening of telomeres) cell lines and mediates sumoylation of shelterin complex (telosome) components which is proposed to lead to shelterin complex disassembly in ALT-associated PML bodies (APBs). Is involved in positive regulation of response to DNA damage stimulus. This Homo sapiens (Human) protein is Non-structural maintenance of chromosomes element 4 homolog A (NSMCE4A).